We begin with the raw amino-acid sequence, 101 residues long: Acylphosphatase (101 aa).

Residues 12–98 form the Acylphosphatase-like domain; it reads RAHVFVTGRV…EGLRGFEVKR (87 aa). Residues R27 and N45 contribute to the active site.

It belongs to the acylphosphatase family.

The enzyme catalyses an acyl phosphate + H2O = a carboxylate + phosphate + H(+). The polypeptide is Acylphosphatase (acyP) (Nostoc sp. (strain PCC 7120 / SAG 25.82 / UTEX 2576)).